A 311-amino-acid chain; its full sequence is Aspartate carbamoyltransferase catalytic subunit (311 aa).

2 residues coordinate carbamoyl phosphate: R58 and T59. K86 contributes to the L-aspartate binding site. Carbamoyl phosphate is bound by residues R108, H136, and Q139. R169 and R223 together coordinate L-aspartate. Positions 264 and 265 each coordinate carbamoyl phosphate.

It belongs to the aspartate/ornithine carbamoyltransferase superfamily. ATCase family. In terms of assembly, heterododecamer (2C3:3R2) of six catalytic PyrB chains organized as two trimers (C3), and six regulatory PyrI chains organized as three dimers (R2).

The enzyme catalyses carbamoyl phosphate + L-aspartate = N-carbamoyl-L-aspartate + phosphate + H(+). Its pathway is pyrimidine metabolism; UMP biosynthesis via de novo pathway; (S)-dihydroorotate from bicarbonate: step 2/3. Functionally, catalyzes the condensation of carbamoyl phosphate and aspartate to form carbamoyl aspartate and inorganic phosphate, the committed step in the de novo pyrimidine nucleotide biosynthesis pathway. In Desulfosudis oleivorans (strain DSM 6200 / JCM 39069 / Hxd3) (Desulfococcus oleovorans), this protein is Aspartate carbamoyltransferase catalytic subunit.